Here is a 393-residue protein sequence, read N- to C-terminus: Lipoyl synthase, mitochondrial (393 aa).

Positions 115, 120, 126, 146, 150, 153, and 362 each coordinate [4Fe-4S] cluster. Residues 131–351 (ETGTATATIM…RILGMDMGFR (221 aa)) form the Radical SAM core domain.

This sequence belongs to the radical SAM superfamily. Lipoyl synthase family. The cofactor is [4Fe-4S] cluster.

The protein localises to the mitochondrion. It catalyses the reaction [[Fe-S] cluster scaffold protein carrying a second [4Fe-4S](2+) cluster] + N(6)-octanoyl-L-lysyl-[protein] + 2 oxidized [2Fe-2S]-[ferredoxin] + 2 S-adenosyl-L-methionine + 4 H(+) = [[Fe-S] cluster scaffold protein] + N(6)-[(R)-dihydrolipoyl]-L-lysyl-[protein] + 4 Fe(3+) + 2 hydrogen sulfide + 2 5'-deoxyadenosine + 2 L-methionine + 2 reduced [2Fe-2S]-[ferredoxin]. The protein operates within protein modification; protein lipoylation via endogenous pathway; protein N(6)-(lipoyl)lysine from octanoyl-[acyl-carrier-protein]: step 2/2. Functionally, catalyzes the radical-mediated insertion of two sulfur atoms into the C-6 and C-8 positions of the octanoyl moiety bound to the lipoyl domains of lipoate-dependent enzymes, thereby converting the octanoylated domains into lipoylated derivatives. The polypeptide is Lipoyl synthase, mitochondrial (Vitis vinifera (Grape)).